The chain runs to 320 residues: Protein MRG1 (320 aa).

The disordered stretch occupies residues 1–28 (MGSSSKEETASDGDTASGGASPSNDGRL). Residues 12-24 (DGDTASGGASPSN) are compositionally biased toward polar residues. Positions 30–80 (SEGERVLAYHGPRVYGAKVQKVELRKKEWKYFVHYLGWNKNWDEWVSADRL) constitute a Tudor-knot domain. Basic and acidic residues predominate over residues 93-104 (ALDKKQGVEKGT). A disordered region spans residues 93–147 (ALDKKQGVEKGTKSGRSAQTKTRSSADTKADKDDTKTNAAKGKKRKHESGNEKDN). Positions 106–115 (SGRSAQTKTR) are enriched in polar residues. Residues 116-128 (SSADTKADKDDTK) show a composition bias toward basic and acidic residues. In terms of domain architecture, MRG spans 150-318 (AEKLMKIQIP…KVSDGKGKGK (169 aa)).

As to quaternary structure, interacts with HAM1 and HAM2. Interacts (via MRG domain) with CO. Component of the NuA4 histone acetyltransferase complex. Ubiquitous. Mainly expressed in the vasculature of cotyledons and leaves, and in roots and inflorescences.

Its subcellular location is the nucleus. Its function is as follows. Chromatin remodeling factor. Acts as a 'reader' protein by binding to H3K36me3 and H3K36me3 to control histone H4 acetylation. Increases the transcriptional levels of the flowering time genes FLC and FT. Binds the chromatin at the FT promoter upon interaction with CO. The polypeptide is Protein MRG1 (Arabidopsis thaliana (Mouse-ear cress)).